We begin with the raw amino-acid sequence, 462 residues long: Hydroxymethylglutaryl-CoA synthase (462 aa).

Glutamate 86 (proton donor/acceptor) is an active-site residue. Residue cysteine 120 is the Acyl-thioester intermediate of the active site. The (3S)-3-hydroxy-3-methylglutaryl-CoA site is built by cysteine 120, threonine 211, histidine 261, lysine 270, asparagine 338, and serine 372. The active-site Proton donor/acceptor is the histidine 261.

This sequence belongs to the thiolase-like superfamily. HMG-CoA synthase family.

It carries out the reaction acetoacetyl-CoA + acetyl-CoA + H2O = (3S)-3-hydroxy-3-methylglutaryl-CoA + CoA + H(+). It participates in siderophore biosynthesis. Functionally, hydroxymethylglutaryl-CoA synthase involved in the biosynthesis of siderophore ferrichrome A which is contributing to organismal virulence. The first step of ferrichrome A biosynthesis is performed by the HMG-CoA synthase hcs1 which catalyzes the generation of HMG-CoA and CoA using acetoacetyl-CoA and acetyl-CoA as substrates. The enoyl-CoA isomerase/hydratase fer4 then catalyzes the conversion of hcs1-produced HMG-CoA to methylglutaconyl-CoA. The acyltransferase fer5 then fuses the fer4-generated methylglutaconyl-CoA with sid1-generated hydroxyornithine to yield methylglutaconyl hydroxyornithine. Methylglutaconyl hydroxyornithine is then available for use by the NRPS fer3 to generate ferrichrome A. This Mycosarcoma maydis (Corn smut fungus) protein is Hydroxymethylglutaryl-CoA synthase.